The following is a 233-amino-acid chain: Ribonuclease 3 (233 aa).

One can recognise an RNase III domain in the interval 8–135; that stretch reads AQRFLEDKQL…VIGAIYLDQG (128 aa). A Mg(2+)-binding site is contributed by Glu-48. Asp-52 is an active-site residue. Residues Asp-121 and Glu-124 each contribute to the Mg(2+) site. Glu-124 is a catalytic residue. One can recognise a DRBM domain in the interval 161–230; that stretch reads DYKSKLQELV…AQKVLQDNLV (70 aa).

The protein belongs to the ribonuclease III family. As to quaternary structure, homodimer. It depends on Mg(2+) as a cofactor.

The protein localises to the cytoplasm. The catalysed reaction is Endonucleolytic cleavage to 5'-phosphomonoester.. In terms of biological role, digests double-stranded RNA. Involved in the processing of primary rRNA transcript to yield the immediate precursors to the large and small rRNAs (23S and 16S). Processes some mRNAs, and tRNAs when they are encoded in the rRNA operon. Processes pre-crRNA and tracrRNA of type II CRISPR loci if present in the organism. The chain is Ribonuclease 3 from Syntrophomonas wolfei subsp. wolfei (strain DSM 2245B / Goettingen).